We begin with the raw amino-acid sequence, 208 residues long: Small ribosomal subunit protein uS4 (208 aa).

Positions 98–163 (SRLDNVVYRA…LTPFVIARAV (66 aa)) constitute an S4 RNA-binding domain.

This sequence belongs to the universal ribosomal protein uS4 family. Part of the 30S ribosomal subunit. Contacts protein S5. The interaction surface between S4 and S5 is involved in control of translational fidelity.

Functionally, one of the primary rRNA binding proteins, it binds directly to 16S rRNA where it nucleates assembly of the body of the 30S subunit. In terms of biological role, with S5 and S12 plays an important role in translational accuracy. In Acidothermus cellulolyticus (strain ATCC 43068 / DSM 8971 / 11B), this protein is Small ribosomal subunit protein uS4.